Here is a 294-residue protein sequence, read N- to C-terminus: Phosphatidylserine decarboxylase proenzyme (294 aa).

Active-site charge relay system; for autoendoproteolytic cleavage activity residues include Asp-100, His-157, and Ser-261. Ser-261 serves as the catalytic Schiff-base intermediate with substrate; via pyruvic acid; for decarboxylase activity. Ser-261 is modified (pyruvic acid (Ser); by autocatalysis).

It belongs to the phosphatidylserine decarboxylase family. PSD-B subfamily. Prokaryotic type I sub-subfamily. As to quaternary structure, heterodimer of a large membrane-associated beta subunit and a small pyruvoyl-containing alpha subunit. Pyruvate is required as a cofactor. Post-translationally, is synthesized initially as an inactive proenzyme. Formation of the active enzyme involves a self-maturation process in which the active site pyruvoyl group is generated from an internal serine residue via an autocatalytic post-translational modification. Two non-identical subunits are generated from the proenzyme in this reaction, and the pyruvate is formed at the N-terminus of the alpha chain, which is derived from the carboxyl end of the proenzyme. The autoendoproteolytic cleavage occurs by a canonical serine protease mechanism, in which the side chain hydroxyl group of the serine supplies its oxygen atom to form the C-terminus of the beta chain, while the remainder of the serine residue undergoes an oxidative deamination to produce ammonia and the pyruvoyl prosthetic group on the alpha chain. During this reaction, the Ser that is part of the protease active site of the proenzyme becomes the pyruvoyl prosthetic group, which constitutes an essential element of the active site of the mature decarboxylase.

It localises to the cell membrane. The enzyme catalyses a 1,2-diacyl-sn-glycero-3-phospho-L-serine + H(+) = a 1,2-diacyl-sn-glycero-3-phosphoethanolamine + CO2. It participates in phospholipid metabolism; phosphatidylethanolamine biosynthesis; phosphatidylethanolamine from CDP-diacylglycerol: step 2/2. In terms of biological role, catalyzes the formation of phosphatidylethanolamine (PtdEtn) from phosphatidylserine (PtdSer). The protein is Phosphatidylserine decarboxylase proenzyme of Histophilus somni (strain 2336) (Haemophilus somnus).